The primary structure comprises 1755 residues: Periplakin (1755 aa).

The span at M1 to G11 shows a compositional bias: basic residues. The disordered stretch occupies residues M1–R20. S14 bears the Phosphoserine mark. 2 coiled-coil regions span residues T16–Y125 and L182–V387. Spectrin repeat units lie at residues Q214–K315, H321–Q483, and R503–D610. Positions L397–T453 constitute an SH3 domain. Residue S463 is modified to Phosphoserine. Coiled-coil stretches lie at residues V611–H819 and L883–V1644. S885, S947, S1583, and S1656 each carry phosphoserine. The interval E1556–K1755 is interacts with BFSP2 and VIM. Plectin repeat units follow at residues E1650–F1684 and V1699–Y1734.

It belongs to the plakin or cytolinker family. As to quaternary structure, homodimer or a heterodimer with EVPL. Found in a complex composed of PPL (via C-terminal linker domain), BFSP1 and BFSP2 in the retinal lens. Within the complex interacts (via C-terminal linker domain) with BFSP2. Interacts with VIM. Binds to the PH domain of AKT1. Interacts with FCGR1A. May interact with PPHLN1. In terms of tissue distribution, expressed in the retinal lens (at protein level).

It localises to the cell junction. Its subcellular location is the desmosome. The protein localises to the cytoplasm. The protein resides in the cytoskeleton. It is found in the cell membrane. Component of the cornified envelope of keratinocytes. May link the cornified envelope to desmosomes and intermediate filaments. May act as a localization signal in PKB/AKT-mediated signaling. This Mus musculus (Mouse) protein is Periplakin (Ppl).